A 407-amino-acid polypeptide reads, in one-letter code: 1-deoxy-D-xylulose 5-phosphate reductoisomerase (407 aa).

NADPH-binding residues include Thr22, Gly23, Ser24, Ile25, Gly48, Asn51, and Asn128. Position 129 (Lys129) interacts with 1-deoxy-D-xylulose 5-phosphate. Residue Glu130 participates in NADPH binding. Residue Asp152 participates in Mn(2+) binding. 4 residues coordinate 1-deoxy-D-xylulose 5-phosphate: Ser153, Glu154, Ser178, and His201. Glu154 serves as a coordination point for Mn(2+). Gly207 is a binding site for NADPH. Ser214, Asn219, Lys220, and Glu223 together coordinate 1-deoxy-D-xylulose 5-phosphate. Glu223 contributes to the Mn(2+) binding site.

It belongs to the DXR family. The cofactor is Mg(2+). Mn(2+) serves as cofactor.

It carries out the reaction 2-C-methyl-D-erythritol 4-phosphate + NADP(+) = 1-deoxy-D-xylulose 5-phosphate + NADPH + H(+). Its pathway is isoprenoid biosynthesis; isopentenyl diphosphate biosynthesis via DXP pathway; isopentenyl diphosphate from 1-deoxy-D-xylulose 5-phosphate: step 1/6. Catalyzes the NADPH-dependent rearrangement and reduction of 1-deoxy-D-xylulose-5-phosphate (DXP) to 2-C-methyl-D-erythritol 4-phosphate (MEP). This is 1-deoxy-D-xylulose 5-phosphate reductoisomerase from Mycobacterium avium (strain 104).